A 365-amino-acid polypeptide reads, in one-letter code: Probable 7-methylxanthine methyltransferase 4 (365 aa).

Tyrosine 18 provides a ligand contact to S-adenosyl-L-homocysteine. Residue threonine 25 participates in theobromine binding. 6 residues coordinate S-adenosyl-L-homocysteine: cysteine 62, glutamine 67, aspartate 99, leucine 100, serine 132, and phenylalanine 133. The theobromine site is built by tyrosine 150, histidine 153, and tryptophan 154. Residues asparagine 170, aspartate 256, phenylalanine 258, and asparagine 259 each contribute to the Mg(2+) site. Residue phenylalanine 311 coordinates theobromine.

Belongs to the methyltransferase superfamily. Type-7 methyltransferase family. Mg(2+) serves as cofactor.

It carries out the reaction 7-methylxanthine + S-adenosyl-L-methionine = theobromine + S-adenosyl-L-homocysteine + H(+). The protein operates within alkaloid biosynthesis. Functionally, involved in the biosynthesis of theobromine. This is Probable 7-methylxanthine methyltransferase 4 from Theobroma cacao (Cacao).